A 542-amino-acid polypeptide reads, in one-letter code: Valine N-monooxygenase 1 (542 aa).

The Cytoplasmic portion of the chain corresponds to 1–21; sequence MAMNVSTTIGLLNATSFASSS. The helical; Signal-anchor for type II membrane protein transmembrane segment at 22–42 threads the bilayer; it reads SINTVKILFVTLFISIVSTIV. Residues 43-542 lie on the Lumenal side of the membrane; the sequence is KLQKSAANKE…LAPHLYPTSP (500 aa). N-linked (GlcNAc...) asparagine glycosylation occurs at Asn-278. Cys-478 is a heme binding site. An N-linked (GlcNAc...) asparagine glycan is attached at Asn-506.

The protein belongs to the cytochrome P450 family. It depends on heme as a cofactor. In terms of tissue distribution, expressed in the epidermis, the next two cortex cell layers, the endodermis and the pericycle of leaf petioles. Strong expression around the laticifers among the phloem cells and in parenchymatic cells between the protoxylem and the metaxylem cells. In the leaves, preferentially expressed in the mesophyll cells adjacent to the epidermis.

The protein localises to the microsome membrane. The enzyme catalyses L-valine + 2 reduced [NADPH--hemoprotein reductase] + 2 O2 = (E)-2-methylpropanal oxime + 2 oxidized [NADPH--hemoprotein reductase] + CO2 + 3 H2O + 2 H(+). It catalyses the reaction L-valine + reduced [NADPH--hemoprotein reductase] + O2 = N-hydroxy-L-valine + oxidized [NADPH--hemoprotein reductase] + H2O + 2 H(+). It carries out the reaction N-hydroxy-L-valine + reduced [NADPH--hemoprotein reductase] + O2 = N,N-dihydroxy-L-valine + oxidized [NADPH--hemoprotein reductase] + H2O + H(+). The catalysed reaction is L-isoleucine + 2 reduced [NADPH--hemoprotein reductase] + 2 O2 = (1E,2S)-2-methylbutanal oxime + 2 oxidized [NADPH--hemoprotein reductase] + CO2 + 3 H2O + 2 H(+). The enzyme catalyses L-isoleucine + reduced [NADPH--hemoprotein reductase] + O2 = N-hydroxy-L-isoleucine + oxidized [NADPH--hemoprotein reductase] + H2O + 2 H(+). It catalyses the reaction N-hydroxy-L-isoleucine + reduced [NADPH--hemoprotein reductase] + O2 = N,N-dihydroxy-L-isoleucine + oxidized [NADPH--hemoprotein reductase] + H2O + H(+). Its pathway is secondary metabolite biosynthesis. With respect to regulation, inhibited by tetcyclasis but not by 1-aminobenzotriazole (ABT). Functionally, involved in the biosynthesis of the cyanogenic glucosides linamarin and lotaustralin. Can use L-valine or L-isoleucine as substrate, but not L-leucine, L-phenylalanine, L-tyrosine, D-valine or D-isoleucine. Catalyzes multi-step reactions starting with two successive N-hydroxylations using L-valine and L-isoleucine as substrates leading to the formation of N,N-dihydroxy-L-valine and N,N-dihydroxy-L-isoleucine, respectively; following spontaneous reactions lead to the production of (E)-2-methylpropanal oxime and (1E,2S)-2-methylbutanal oxime, respectively. The sequence is that of Valine N-monooxygenase 1 from Manihot esculenta (Cassava).